Here is a 211-residue protein sequence, read N- to C-terminus: Thiamine-phosphate synthase (211 aa).

Residues 37–41 and asparagine 69 contribute to the 4-amino-2-methyl-5-(diphosphooxymethyl)pyrimidine site; that span reads QLRIK. 2 residues coordinate Mg(2+): aspartate 70 and aspartate 89. Residue serine 108 participates in 4-amino-2-methyl-5-(diphosphooxymethyl)pyrimidine binding. 134 to 136 contacts 2-[(2R,5Z)-2-carboxy-4-methylthiazol-5(2H)-ylidene]ethyl phosphate; that stretch reads TQT. Residue lysine 137 coordinates 4-amino-2-methyl-5-(diphosphooxymethyl)pyrimidine. 2-[(2R,5Z)-2-carboxy-4-methylthiazol-5(2H)-ylidene]ethyl phosphate contacts are provided by residues glycine 166 and 186 to 187; that span reads VS.

It belongs to the thiamine-phosphate synthase family. Mg(2+) is required as a cofactor.

It catalyses the reaction 2-[(2R,5Z)-2-carboxy-4-methylthiazol-5(2H)-ylidene]ethyl phosphate + 4-amino-2-methyl-5-(diphosphooxymethyl)pyrimidine + 2 H(+) = thiamine phosphate + CO2 + diphosphate. The catalysed reaction is 2-(2-carboxy-4-methylthiazol-5-yl)ethyl phosphate + 4-amino-2-methyl-5-(diphosphooxymethyl)pyrimidine + 2 H(+) = thiamine phosphate + CO2 + diphosphate. The enzyme catalyses 4-methyl-5-(2-phosphooxyethyl)-thiazole + 4-amino-2-methyl-5-(diphosphooxymethyl)pyrimidine + H(+) = thiamine phosphate + diphosphate. It participates in cofactor biosynthesis; thiamine diphosphate biosynthesis; thiamine phosphate from 4-amino-2-methyl-5-diphosphomethylpyrimidine and 4-methyl-5-(2-phosphoethyl)-thiazole: step 1/1. Its function is as follows. Condenses 4-methyl-5-(beta-hydroxyethyl)thiazole monophosphate (THZ-P) and 2-methyl-4-amino-5-hydroxymethyl pyrimidine pyrophosphate (HMP-PP) to form thiamine monophosphate (TMP). This Escherichia coli O157:H7 protein is Thiamine-phosphate synthase.